Here is a 138-residue protein sequence, read N- to C-terminus: ATP synthase epsilon chain (138 aa).

The protein belongs to the ATPase epsilon chain family. F-type ATPases have 2 components, CF(1) - the catalytic core - and CF(0) - the membrane proton channel. CF(1) has five subunits: alpha(3), beta(3), gamma(1), delta(1), epsilon(1). CF(0) has three main subunits: a, b and c.

It localises to the cell inner membrane. In terms of biological role, produces ATP from ADP in the presence of a proton gradient across the membrane. The polypeptide is ATP synthase epsilon chain (Vesicomyosocius okutanii subsp. Calyptogena okutanii (strain HA)).